The primary structure comprises 103 residues: Cystatin-A8 (103 aa).

The tract at residues 1 to 20 (MESEEMLAGGLTEPRPATPE) is disordered. The short motif at 51 to 55 (QVVAG) is the Secondary area of contact element.

This sequence belongs to the cystatin family.

The protein resides in the cytoplasm. Its function is as follows. This is an intracellular thiol proteinase inhibitor. In Sus scrofa (Pig), this protein is Cystatin-A8.